The primary structure comprises 128 residues: Mediator of RNA polymerase II transcription subunit 31-A (128 aa).

Belongs to the Mediator complex subunit 31 family. In terms of assembly, component of the Mediator complex.

It is found in the nucleus. Its function is as follows. Component of the Mediator complex, a coactivator involved in the regulated transcription of nearly all RNA polymerase II-dependent genes. Mediator functions as a bridge to convey information from gene-specific regulatory proteins to the basal RNA polymerase II transcription machinery. Mediator is recruited to promoters by direct interactions with regulatory proteins and serves as a scaffold for the assembly of a functional preinitiation complex with RNA polymerase II and the general transcription factors. The sequence is that of Mediator of RNA polymerase II transcription subunit 31-A (med31-a) from Xenopus laevis (African clawed frog).